The primary structure comprises 295 residues: MKYKRIVFKVGTSSITRSDGSLSRGKIQTITRQLAALHRAGHELVLVSSGAVAAGFGALGFKKRPVKIADKQASAAVGQGLLMEEYTANLSSDGIVSAQILLSRADFADKRRYQNAGGALSVLLQRRAIPIINENDTVSVEELKIGDNDTLSAQVAAMIQADLLVLLTDIDDLYTGNPNSNPDAVRLDKIEHINHEIIKMAGGSGSANGTGGMLTKIKAATIAAESGVPVYICSSLKPDSLAEAAEHQADGSFFVPRAKGLRTQKQWLAFYSESRGSVYVDEGAEHALSEQGKAC.

K9 lines the ATP pocket. 3 residues coordinate substrate: S49, D136, and N148. ATP is bound by residues 168 to 169 (TD) and 210 to 216 (TGGMLTK).

It belongs to the glutamate 5-kinase family.

It is found in the cytoplasm. The catalysed reaction is L-glutamate + ATP = L-glutamyl 5-phosphate + ADP. Its pathway is amino-acid biosynthesis; L-proline biosynthesis; L-glutamate 5-semialdehyde from L-glutamate: step 1/2. Functionally, catalyzes the transfer of a phosphate group to glutamate to form L-glutamate 5-phosphate. The chain is Glutamate 5-kinase from Neisseria gonorrhoeae (strain NCCP11945).